The chain runs to 301 residues: Coiled-coil domain-containing protein 69-B (301 aa).

The disordered stretch occupies residues 1 to 43 (MGSKTSKMCCPQLRKKKRQKAHKEGPSSQELNDLNAKSQGPNE). Gly-2 carries the N-myristoyl glycine lipid modification. Residues 26–41 (PSSQELNDLNAKSQGP) show a composition bias toward polar residues. 2 coiled-coil regions span residues 42–167 (NELL…SILS) and 213–281 (KSTM…NLYR).

The protein belongs to the CCDC69 family.

The protein resides in the cytoplasm. Its subcellular location is the cytoskeleton. It is found in the spindle. It localises to the midbody. In terms of biological role, may act as a scaffold to regulate the recruitment and assembly of spindle midzone components. This chain is Coiled-coil domain-containing protein 69-B (ccdc69-b), found in Xenopus laevis (African clawed frog).